The chain runs to 487 residues: Cytochrome P450 monooxygenase pyvB (487 aa).

Residues Pro17–Pro37 form a helical membrane-spanning segment. Position 426 (Cys426) interacts with heme.

The protein belongs to the cytochrome P450 family. The cofactor is heme.

Its subcellular location is the membrane. Its pathway is secondary metabolite biosynthesis. Its function is as follows. Cytochrome P450 monooxygenase; part of the gene cluster that mediates the biosynthesis of pyranoviolin A, a pyranonigrin analog with a C-3 methoxy group. Initially, the PKS portion of pyvA synthesizes C-10 carbon chain from 5 molecules of malonyl-CoA, which is then condensed with the thiolation (T) domain-bound glycine activated by the adenylation (A) domain. The subsequent chain release by Dieckmann condensation (DKC) could be catalyzed by the TE domain present at the C-terminus of pyvA and/or the alpha/beta hydrolase pyvD, installing the tetramic acid moiety. The FAD-dependent monooxygenase pyvC next epoxidizes one of the olefins of the polyketide part, and the epoxide ring-opening induces the dihydro-gamma-pyrone ring formation. The cytochrome P450 monooxygeanse pyvB would be responsible for the 2 consecutive reactions, in which the dihydro-gamma-pyrone is oxidized to gamma-pyrone and C-7 is hydroxylated to yield pyranonigrin F. Finally, the O-methyltransferase pyvH methylates the C-3 hydroxy group to complete the biosynthesis. The protein is Cytochrome P450 monooxygenase pyvB of Aspergillus violaceofuscus (strain CBS 115571).